Reading from the N-terminus, the 479-residue chain is Aspartyl/glutamyl-tRNA(Asn/Gln) amidotransferase subunit B (479 aa).

This sequence belongs to the GatB/GatE family. GatB subfamily. In terms of assembly, heterotrimer of A, B and C subunits.

It catalyses the reaction L-glutamyl-tRNA(Gln) + L-glutamine + ATP + H2O = L-glutaminyl-tRNA(Gln) + L-glutamate + ADP + phosphate + H(+). The enzyme catalyses L-aspartyl-tRNA(Asn) + L-glutamine + ATP + H2O = L-asparaginyl-tRNA(Asn) + L-glutamate + ADP + phosphate + 2 H(+). Functionally, allows the formation of correctly charged Asn-tRNA(Asn) or Gln-tRNA(Gln) through the transamidation of misacylated Asp-tRNA(Asn) or Glu-tRNA(Gln) in organisms which lack either or both of asparaginyl-tRNA or glutaminyl-tRNA synthetases. The reaction takes place in the presence of glutamine and ATP through an activated phospho-Asp-tRNA(Asn) or phospho-Glu-tRNA(Gln). In Streptococcus pyogenes serotype M6 (strain ATCC BAA-946 / MGAS10394), this protein is Aspartyl/glutamyl-tRNA(Asn/Gln) amidotransferase subunit B.